The following is a 217-amino-acid chain: Ribonuclease HII (217 aa).

Positions 27–216 (SRVAGVDEAG…VKESIQEGVC (190 aa)) constitute an RNase H type-2 domain. Aspartate 33, glutamate 34, and aspartate 126 together coordinate a divalent metal cation.

It belongs to the RNase HII family. It depends on Mn(2+) as a cofactor. The cofactor is Mg(2+).

The protein resides in the cytoplasm. The catalysed reaction is Endonucleolytic cleavage to 5'-phosphomonoester.. Functionally, endonuclease that specifically degrades the RNA of RNA-DNA hybrids. This is Ribonuclease HII from Chlamydia trachomatis serovar A (strain ATCC VR-571B / DSM 19440 / HAR-13).